Reading from the N-terminus, the 153-residue chain is Subtilisin propeptide-like protein (153 aa).

Positions M1 to S27 are cleaved as a signal peptide. Residues Q127–L153 are dispensable for parasite growth in host erythrocytes.

It is found in the secreted. The protein localises to the parasitophorous vacuole lumen. The protein resides in the cell membrane. Its function is as follows. Acts as a specific inhibitor of subtilisin-like protease SUB1. This Plasmodium falciparum (isolate 3D7) protein is Subtilisin propeptide-like protein.